The following is a 327-amino-acid chain: Melanoma-associated antigen B18 (327 aa).

A compositionally biased stretch (basic residues) spans 1 to 19; the sequence is MPRGQKSKLRAREKRRQAR. Residues 1 to 85 are disordered; it reads MPRGQKSKLR…SSDDSEDTED (85 aa). Over residues 46–70 the composition is skewed to polar residues; the sequence is MPTSPNMPMGEQSTFSHSYTSTSDQ. The MAGE domain maps to 91–289; the sequence is INHKVVLLVQ…DSFPTLYEAA (199 aa).

In terms of assembly, interacts with LNX1. As to expression, expressed in testis, stomach, large intestine, small intestine, spleen, lymph node, bone marrow lymphocytes and blood T-lymphocytes. Not detected in brain, heart, lung, liver or kidney (at protein level).

It is found in the cytoplasm. Its function is as follows. May enhance ubiquitin ligase activity of RING-type zinc finger-containing E3 ubiquitin-protein ligases. Proposed to act through recruitment and/or stabilization of the Ubl-conjugating enzyme (E2) at the E3:substrate complex. In Mus musculus (Mouse), this protein is Melanoma-associated antigen B18.